The sequence spans 262 residues: 14-3-3 protein epsilon (262 aa).

Residues glutamine 236–serine 262 form a disordered region. Serine 262 bears the Phosphoserine mark.

The protein belongs to the 14-3-3 family. In terms of assembly, homodimer. Interacts with phosphorylated yki. Interacts with pav (when serine phosphorylated); the interaction is necessary for association of the complex pav-14-3-3epsilon complex to the microtubules, thereby inhibiting microtubule sliding.

In terms of biological role, positively regulates Ras-mediated pathways. Acts downstream or parallel to Raf, but upstream of nuclear factors in Ras signaling. Three mutants have been isolated, that suppress the rough eye phenotype caused by mutated Ras1 (sev-Ras1 v12). Inhibits yki activity by restricting its nuclear localization. Together with pav, has a role in the inhibition of microtubule sliding during neurite outgrowth. The chain is 14-3-3 protein epsilon (14-3-3epsilon) from Drosophila melanogaster (Fruit fly).